We begin with the raw amino-acid sequence, 98 residues long: Co-chaperonin GroES (98 aa).

It belongs to the GroES chaperonin family. Heptamer of 7 subunits arranged in a ring. Interacts with the chaperonin GroEL.

It localises to the cytoplasm. Functionally, together with the chaperonin GroEL, plays an essential role in assisting protein folding. The GroEL-GroES system forms a nano-cage that allows encapsulation of the non-native substrate proteins and provides a physical environment optimized to promote and accelerate protein folding. GroES binds to the apical surface of the GroEL ring, thereby capping the opening of the GroEL channel. This chain is Co-chaperonin GroES, found in Neorickettsia sennetsu (strain ATCC VR-367 / Miyayama) (Ehrlichia sennetsu).